The following is a 223-amino-acid chain: uncharacterized protein (223 aa).

Transmembrane regions (helical) follow at residues 28–48 (LSNT…GLIT), 59–79 (LIVQ…ITLA), 88–108 (AFNQ…MFFI), 128–148 (IVGL…VWLS), and 176–196 (AWAI…YMIV).

It localises to the cell membrane. This is an uncharacterized protein from Mycoplasma pneumoniae (strain ATCC 29342 / M129 / Subtype 1) (Mycoplasmoides pneumoniae).